Here is a 151-residue protein sequence, read N- to C-terminus: ATP synthase subunit b' (151 aa).

The chain crosses the membrane as a helical span at residues 18–38 (TLPLMALQVVLLTFILNALFF).

The protein belongs to the ATPase B chain family. In terms of assembly, F-type ATPases have 2 components, F(1) - the catalytic core - and F(0) - the membrane proton channel. F(1) has five subunits: alpha(3), beta(3), gamma(1), delta(1), epsilon(1). F(0) has four main subunits: a(1), b(1), b'(1) and c(10-14). The alpha and beta chains form an alternating ring which encloses part of the gamma chain. F(1) is attached to F(0) by a central stalk formed by the gamma and epsilon chains, while a peripheral stalk is formed by the delta, b and b' chains.

The protein resides in the cellular thylakoid membrane. Its function is as follows. F(1)F(0) ATP synthase produces ATP from ADP in the presence of a proton or sodium gradient. F-type ATPases consist of two structural domains, F(1) containing the extramembraneous catalytic core and F(0) containing the membrane proton channel, linked together by a central stalk and a peripheral stalk. During catalysis, ATP synthesis in the catalytic domain of F(1) is coupled via a rotary mechanism of the central stalk subunits to proton translocation. Functionally, component of the F(0) channel, it forms part of the peripheral stalk, linking F(1) to F(0). The b'-subunit is a diverged and duplicated form of b found in plants and photosynthetic bacteria. This Prochlorococcus marinus (strain MIT 9303) protein is ATP synthase subunit b'.